The chain runs to 368 residues: Ribosomal RNA large subunit methyltransferase M (368 aa).

S-adenosyl-L-methionine contacts are provided by residues S192, 225–228, D244, D264, and D281; that span reads APGG. K310 functions as the Proton acceptor in the catalytic mechanism.

It belongs to the class I-like SAM-binding methyltransferase superfamily. RNA methyltransferase RlmE family. RlmM subfamily. In terms of assembly, monomer.

It is found in the cytoplasm. The enzyme catalyses cytidine(2498) in 23S rRNA + S-adenosyl-L-methionine = 2'-O-methylcytidine(2498) in 23S rRNA + S-adenosyl-L-homocysteine + H(+). Catalyzes the 2'-O-methylation at nucleotide C2498 in 23S rRNA. This Colwellia psychrerythraea (strain 34H / ATCC BAA-681) (Vibrio psychroerythus) protein is Ribosomal RNA large subunit methyltransferase M.